The primary structure comprises 696 residues: ATP-dependent zinc metalloprotease FtsH (696 aa).

The Cytoplasmic segment spans residues 1–29 (MWLQVTNCSTLHSSLSYCGANTLSDMAKN). Residues 30-50 (LILWLVIAVVLMSVFQSFGPS) form a helical membrane-spanning segment. The Periplasmic segment spans residues 51–124 (DSAGRQVDYT…LGTPPEEPSL (74 aa)). The chain crosses the membrane as a helical span at residues 125 to 145 (LASIFISWFPMLLLIGVWVFF). Residues 146 to 696 (MRQMQGGGGG…APKEDDKPQA (551 aa)) lie on the Cytoplasmic side of the membrane. An ATP-binding site is contributed by 219–226 (GPPGTGKT). Zn(2+) is bound at residue His441. Glu442 is an active-site residue. Positions 445 and 519 each coordinate Zn(2+). The tract at residues 627-696 (RAPKGWGDTD…APKEDDKPQA (70 aa)) is disordered. A compositionally biased stretch (basic and acidic residues) spans 650–696 (PEAKTESAPEAKAEANVETEEKPVAADSEELKPKAEQAPKEDDKPQA).

The protein in the central section; belongs to the AAA ATPase family. In the C-terminal section; belongs to the peptidase M41 family. As to quaternary structure, homohexamer. Zn(2+) is required as a cofactor.

It is found in the cell inner membrane. Functionally, acts as a processive, ATP-dependent zinc metallopeptidase for both cytoplasmic and membrane proteins. Plays a role in the quality control of integral membrane proteins. This chain is ATP-dependent zinc metalloprotease FtsH, found in Photobacterium profundum (strain SS9).